Consider the following 955-residue polypeptide: Leucine--tRNA ligase (955 aa).

The 'HIGH' region motif lies at 51 to 61 (PYLNGVLHAGH). A 'KMSKS' region motif is present at residues 647 to 651 (KLSKS). Lys650 lines the ATP pocket.

The protein belongs to the class-I aminoacyl-tRNA synthetase family.

It localises to the cytoplasm. It carries out the reaction tRNA(Leu) + L-leucine + ATP = L-leucyl-tRNA(Leu) + AMP + diphosphate. This Methanococcus maripaludis (strain C7 / ATCC BAA-1331) protein is Leucine--tRNA ligase.